The following is a 154-amino-acid chain: Large ribosomal subunit protein uL30 (154 aa).

The protein belongs to the universal ribosomal protein uL30 family. As to quaternary structure, part of the 50S ribosomal subunit.

The sequence is that of Large ribosomal subunit protein uL30 from Methanococcus maripaludis (strain C5 / ATCC BAA-1333).